Reading from the N-terminus, the 1131-residue chain is DNA polymerase II large subunit (1131 aa).

The protein belongs to the archaeal DNA polymerase II family. As to quaternary structure, heterodimer of a large subunit and a small subunit.

It carries out the reaction DNA(n) + a 2'-deoxyribonucleoside 5'-triphosphate = DNA(n+1) + diphosphate. It catalyses the reaction Exonucleolytic cleavage in the 3'- to 5'-direction to yield nucleoside 5'-phosphates.. In terms of biological role, possesses two activities: a DNA synthesis (polymerase) and an exonucleolytic activity that degrades single-stranded DNA in the 3'- to 5'-direction. Has a template-primer preference which is characteristic of a replicative DNA polymerase. The chain is DNA polymerase II large subunit from Methanococcus maripaludis (strain C7 / ATCC BAA-1331).